Reading from the N-terminus, the 116-residue chain is Large ribosomal subunit protein bL19 (116 aa).

This sequence belongs to the bacterial ribosomal protein bL19 family.

Its function is as follows. This protein is located at the 30S-50S ribosomal subunit interface and may play a role in the structure and function of the aminoacyl-tRNA binding site. The polypeptide is Large ribosomal subunit protein bL19 (Shewanella loihica (strain ATCC BAA-1088 / PV-4)).